The sequence spans 450 residues: Tubulin alpha-5 chain (450 aa).

Positions 11, 71, 144, 145, 179, 206, and 228 each coordinate GTP. Position 71 (Glu-71) interacts with Mg(2+). Residue Glu-254 is part of the active site.

It belongs to the tubulin family. In terms of assembly, dimer of alpha and beta chains. A typical microtubule is a hollow water-filled tube with an outer diameter of 25 nm and an inner diameter of 15 nM. Alpha-beta heterodimers associate head-to-tail to form protofilaments running lengthwise along the microtubule wall with the beta-tubulin subunit facing the microtubule plus end conferring a structural polarity. Microtubules usually have 13 protofilaments but different protofilament numbers can be found in some organisms and specialized cells. Mg(2+) serves as cofactor. Post-translationally, undergoes a tyrosination/detyrosination cycle, the cyclic removal and re-addition of a C-terminal tyrosine residue by the enzymes tubulin tyrosine carboxypeptidase (TTCP) and tubulin tyrosine ligase (TTL), respectively.

The protein localises to the cytoplasm. The protein resides in the cytoskeleton. The enzyme catalyses GTP + H2O = GDP + phosphate + H(+). Tubulin is the major constituent of microtubules, a cylinder consisting of laterally associated linear protofilaments composed of alpha- and beta-tubulin heterodimers. Microtubules grow by the addition of GTP-tubulin dimers to the microtubule end, where a stabilizing cap forms. Below the cap, tubulin dimers are in GDP-bound state, owing to GTPase activity of alpha-tubulin. The sequence is that of Tubulin alpha-5 chain (TUBA5) from Zea mays (Maize).